A 152-amino-acid polypeptide reads, in one-letter code: Ribonuclease pancreatic gamma-type (152 aa).

The N-terminal stretch at 1–25 (MGLEKSFILFSLLVLVLGCVQPSLV) is a signal peptide. Positions 26 to 48 (GESKESPSEKFKRRHMDEEGPYQ) are disordered. Basic and acidic residues predominate over residues 27 to 43 (ESKESPSEKFKRRHMDE). Positions 35 and 38 each coordinate substrate. H40 acts as the Proton acceptor in catalysis. 4 disulfide bridges follow: C54–C112, C68–C123, C86–C138, and C93–C100. Substrate contacts are provided by residues 69-73 (KPLNT) and K94. The active-site Proton donor is H147.

Belongs to the pancreatic ribonuclease family. Monomer.

The protein resides in the secreted. It catalyses the reaction an [RNA] containing cytidine + H2O = an [RNA]-3'-cytidine-3'-phosphate + a 5'-hydroxy-ribonucleotide-3'-[RNA].. It carries out the reaction an [RNA] containing uridine + H2O = an [RNA]-3'-uridine-3'-phosphate + a 5'-hydroxy-ribonucleotide-3'-[RNA].. Its function is as follows. Endonuclease that catalyzes the cleavage of RNA on the 3' side of pyrimidine nucleotides. Acts on single-stranded and double-stranded RNA. This is Ribonuclease pancreatic gamma-type from Rattus fuscipes (Bush rat).